The primary structure comprises 266 residues: Nuclease (266 aa).

The N-terminal stretch at 1 to 21 (MRFNNKMLALAALLFAAQASA) is a signal peptide. A disulfide bond links C30 and C34. The Proton acceptor role is filled by H110. N140 serves as a coordination point for Mg(2+). Cysteines 222 and 264 form a disulfide.

It belongs to the DNA/RNA non-specific endonuclease family. In terms of assembly, homodimer. Mg(2+) serves as cofactor.

Its subcellular location is the secreted. It catalyses the reaction Endonucleolytic cleavage to 5'-phosphomononucleotide and 5'-phosphooligonucleotide end-products.. In terms of biological role, catalyzes the hydrolysis of both DNA and RNA, double- or single-stranded, at the 3'position of the phosphodiester bond to produce 5'-phosphorylated mono-, di-, tri- and tetranucleotides. DNA is a slightly better substrate than RNA. In Serratia marcescens, this protein is Nuclease (nucA).